A 393-amino-acid chain; its full sequence is NAD(P)H-quinone oxidoreductase subunit H, chloroplastic (393 aa).

This sequence belongs to the complex I 49 kDa subunit family. In terms of assembly, NDH is composed of at least 16 different subunits, 5 of which are encoded in the nucleus.

It localises to the plastid. It is found in the chloroplast thylakoid membrane. It catalyses the reaction a plastoquinone + NADH + (n+1) H(+)(in) = a plastoquinol + NAD(+) + n H(+)(out). The enzyme catalyses a plastoquinone + NADPH + (n+1) H(+)(in) = a plastoquinol + NADP(+) + n H(+)(out). NDH shuttles electrons from NAD(P)H:plastoquinone, via FMN and iron-sulfur (Fe-S) centers, to quinones in the photosynthetic chain and possibly in a chloroplast respiratory chain. The immediate electron acceptor for the enzyme in this species is believed to be plastoquinone. Couples the redox reaction to proton translocation, and thus conserves the redox energy in a proton gradient. This Nicotiana sylvestris (Wood tobacco) protein is NAD(P)H-quinone oxidoreductase subunit H, chloroplastic.